The sequence spans 281 residues: MANLKALLLRIKSVKSIQKTTKVMQMISAAKLHRVQQKLENAKKHLLELSSIVDYVPSDGVHNCASIAKKERVLLVVMSSDRGLCGNFNNLIVKFTKSYVEKLESSNKEVKLIFFGKKAYDMMYSQYSDKILNVFSNTKSITDFLYFKLFVYNSGIDFDQFDNVMILFNKFYTTILQKPDAQQLIPCNLGIPMLLKEVYQYEPTYVDVLSTISLGYVLNLMYIAFLENSASEHCSRMVAMESANRNTKDMLNRLALEYNRSRQASITTDLIEIISGFESLN.

This sequence belongs to the ATPase gamma chain family. As to quaternary structure, F-type ATPases have 2 components, CF(1) - the catalytic core - and CF(0) - the membrane proton channel. CF(1) has five subunits: alpha(3), beta(3), gamma(1), delta(1), epsilon(1). CF(0) has three main subunits: a, b and c.

The protein resides in the cell inner membrane. In terms of biological role, produces ATP from ADP in the presence of a proton gradient across the membrane. The gamma chain is believed to be important in regulating ATPase activity and the flow of protons through the CF(0) complex. This Ehrlichia chaffeensis (strain ATCC CRL-10679 / Arkansas) protein is ATP synthase gamma chain.